A 251-amino-acid chain; its full sequence is CDP-diacylglycerol pyrophosphatase (251 aa).

Residues 4–24 traverse the membrane as a helical segment; the sequence is AGLLFLVMIVIAVVAAGIGYW.

It belongs to the Cdh family.

Its subcellular location is the cell inner membrane. The enzyme catalyses a CDP-1,2-diacyl-sn-glycerol + H2O = a 1,2-diacyl-sn-glycero-3-phosphate + CMP + 2 H(+). It functions in the pathway phospholipid metabolism; CDP-diacylglycerol degradation; phosphatidate from CDP-diacylglycerol: step 1/1. In Shigella flexneri, this protein is CDP-diacylglycerol pyrophosphatase.